Consider the following 209-residue polypeptide: Ribosomal RNA large subunit methyltransferase E (209 aa).

Glycine 63, tryptophan 65, aspartate 83, aspartate 99, and aspartate 124 together coordinate S-adenosyl-L-methionine. Lysine 164 functions as the Proton acceptor in the catalytic mechanism. Residues 191 to 209 (EASRGRSREVYIVATGYKG) enclose the TRAM domain.

It belongs to the class I-like SAM-binding methyltransferase superfamily. RNA methyltransferase RlmE family.

The protein resides in the cytoplasm. The catalysed reaction is uridine(2552) in 23S rRNA + S-adenosyl-L-methionine = 2'-O-methyluridine(2552) in 23S rRNA + S-adenosyl-L-homocysteine + H(+). In terms of biological role, specifically methylates the uridine in position 2552 of 23S rRNA at the 2'-O position of the ribose in the fully assembled 50S ribosomal subunit. This Haemophilus influenzae (strain ATCC 51907 / DSM 11121 / KW20 / Rd) protein is Ribosomal RNA large subunit methyltransferase E.